A 382-amino-acid chain; its full sequence is Galactokinase (382 aa).

34 to 37 is a binding site for substrate; that stretch reads EHTD. ATP is bound at residue 124 to 130; sequence GAGLSSS. Mg(2+) contacts are provided by Ser130 and Glu162. Asp174 (proton acceptor) is an active-site residue. Tyr223 contacts substrate.

This sequence belongs to the GHMP kinase family. GalK subfamily.

The protein resides in the cytoplasm. It carries out the reaction alpha-D-galactose + ATP = alpha-D-galactose 1-phosphate + ADP + H(+). It functions in the pathway carbohydrate metabolism; galactose metabolism. In terms of biological role, catalyzes the transfer of the gamma-phosphate of ATP to D-galactose to form alpha-D-galactose-1-phosphate (Gal-1-P). This chain is Galactokinase, found in Salmonella typhi.